A 102-amino-acid chain; its full sequence is RNA-binding protein Hfq (102 aa).

The 60-residue stretch at 9 to 68 (DPFLNALRRERVPVSIYLVNGIKLQGQIESFDQFVILLKNTVSQMVYKHAISTVVPSRPV) folds into the Sm domain. The interval 63–102 (VPSRPVSHHSNNAGGGTSSNYHHGSSAQGTSAQQDSEETE) is disordered. Over residues 70–96 (HHSNNAGGGTSSNYHHGSSAQGTSAQQ) the composition is skewed to polar residues.

This sequence belongs to the Hfq family. Homohexamer.

RNA chaperone that binds small regulatory RNA (sRNAs) and mRNAs to facilitate mRNA translational regulation in response to envelope stress, environmental stress and changes in metabolite concentrations. Also binds with high specificity to tRNAs. This chain is RNA-binding protein Hfq, found in Citrobacter koseri (strain ATCC BAA-895 / CDC 4225-83 / SGSC4696).